A 250-amino-acid chain; its full sequence is Uridylate kinase (250 aa).

17–20 (KLSG) serves as a coordination point for ATP. Gly59 serves as a coordination point for UMP. Residues Gly60 and Arg64 each contribute to the ATP site. Residues Asp79 and 140 to 147 (TGNPYFTT) contribute to the UMP site. Residues Thr167, Tyr173, and Asp176 each coordinate ATP.

Belongs to the UMP kinase family. In terms of assembly, homohexamer.

Its subcellular location is the cytoplasm. It carries out the reaction UMP + ATP = UDP + ADP. The protein operates within pyrimidine metabolism; CTP biosynthesis via de novo pathway; UDP from UMP (UMPK route): step 1/1. With respect to regulation, inhibited by UTP. In terms of biological role, catalyzes the reversible phosphorylation of UMP to UDP. The polypeptide is Uridylate kinase (Myxococcus xanthus (strain DK1622)).